A 426-amino-acid polypeptide reads, in one-letter code: tRNA(Ile)-lysidine synthase (426 aa).

Residue 21–26 (SGGLDS) participates in ATP binding.

Belongs to the tRNA(Ile)-lysidine synthase family.

The protein localises to the cytoplasm. The enzyme catalyses cytidine(34) in tRNA(Ile2) + L-lysine + ATP = lysidine(34) in tRNA(Ile2) + AMP + diphosphate + H(+). Its function is as follows. Ligates lysine onto the cytidine present at position 34 of the AUA codon-specific tRNA(Ile) that contains the anticodon CAU, in an ATP-dependent manner. Cytidine is converted to lysidine, thus changing the amino acid specificity of the tRNA from methionine to isoleucine. This chain is tRNA(Ile)-lysidine synthase, found in Enterobacter sp. (strain 638).